We begin with the raw amino-acid sequence, 454 residues long: Notoamide biosynthesis cluster protein M' (454 aa).

Asn51 and Asn74 each carry an N-linked (GlcNAc...) asparagine glycan. Residues 205–219 (KARSKEKKPKRKKSK) show a composition bias toward basic residues. Residues 205-224 (KARSKEKKPKRKKSKAEKEH) are disordered. 2 helical membrane passes run 334–354 (MTTVAFVSMVYLPGTFVSGLF) and 375–395 (FWMYWAVTIPLTLLTLGVWGV).

Its subcellular location is the membrane. Its function is as follows. Part of the gene cluster that mediates the biosynthesis of notoamide, a fungal indole alkaloid that belongs to a family of natural products containing a characteristic bicyclo[2.2.2]diazaoctane core. The first step of notoamide biosynthesis involves coupling of L-proline and L-tryptophan by the bimodular NRPS notE', to produce cyclo-L-tryptophan-L-proline called brevianamide F. The reverse prenyltransferase notF' then acts as a deoxybrevianamide E synthase and converts brevianamide F to deoxybrevianamide E via reverse prenylation at C-2 of the indole ring leading to the bicyclo[2.2.2]diazaoctane core. Deoxybrevianamide E is further hydroxylated at C-6 of the indole ring, likely catalyzed by the cytochrome P450 monooxygenase notG', to yield 6-hydroxy-deoxybrevianamide E. 6-hydroxy-deoxybrevianamide E is a specific substrate of the prenyltransferase notC' for normal prenylation at C-7 to produce 6-hydroxy-7-prenyl-deoxybrevianamide, also called notoamide S. As the proposed pivotal branching point in notoamide biosynthesis, notoamide S can be diverted to notoamide E through an oxidative pyran ring closure putatively catalyzed by either notH' cytochrome P450 monooxygenase or the notD' FAD-linked oxidoreductase. This step would be followed by an indole 2,3-epoxidation-initiated pinacol-like rearrangement catalyzed by the notB' FAD-dependent monooxygenase leading to the formation of notoamide C and notoamide D. On the other hand notoamide S is converted to notoamide T by notH' (or notD'), a bifunctional oxidase that also functions as the intramolecular Diels-Alderase responsible for generation of (-)-notoamide T. To generate antipodal (+)-notoaminide T, notH (or notD) in Aspergillus strain MF297-2 is expected to catalyze a Diels-Alder reaction leading to the opposite stereochemistry. The remaining oxidoreductase notD' (or notH') likely catalyzes the oxidative pyran ring formation to yield (-)-stephacidin A. The FAD-dependent monooxygenase notI' is highly similar to notB' and is predicted to catalyze a similar conversion from (-)-stephacidin A to (+)-notoamide B via the 2,3-epoxidation of (-)-stephacidin A followed by a pinacol-type rearrangement. Finally, it remains unclear which enzyme could be responsible for the final hydroxylation steps leading to notoamide A and sclerotiamide. The function of notM' in the notoamide biosynthesis has not been determined yet. This chain is Notoamide biosynthesis cluster protein M', found in Aspergillus versicolor.